Consider the following 388-residue polypeptide: Calreticulin (388 aa).

The first 17 residues, 1-17 (MQLSLLVGLVCFSAINA), serve as a signal peptide directing secretion. A disulfide bridge connects residues Cys103 and Cys135. An alpha-D-glucoside-binding residues include Tyr107, Lys109, Tyr126, and Asp133. Tandem repeats lie at residues 189–200 (AESGELEADWDF), 208–219 (DPDAKKPEDWDE), 225–236 (DEDDKKPEDWDK), 242–253 (DPDAKKPEDWDD), 257–267 (GEWEPPMVDNP), 271–281 (GEWKPKQKKNP), and 285–295 (GKWIHPEIEIP). The interval 189 to 253 (AESGELEADW…DAKKPEDWDD (65 aa)) is 4 X approximate repeats. The tract at residues 193-282 (ELEADWDFLP…WKPKQKKNPA (90 aa)) is disordered. Positions 205–215 (KIKDPDAKKPE) are enriched in basic and acidic residues. The segment covering 216-227 (DWDEREFIDDED) has biased composition (acidic residues). Positions 228-249 (DKKPEDWDKPEHIPDPDAKKPE) are enriched in basic and acidic residues. The segment covering 250 to 259 (DWDDEMDGEW) has biased composition (acidic residues). A 3 X approximate repeats region spans residues 257 to 295 (GEWEPPMVDNPEYKGEWKPKQKKNPAYKGKWIHPEIEIP). Position 315 (Asp315) interacts with an alpha-D-glucoside. Positions 349–388 (REGEKKKGKKTKKQKKKEKNEKIKKEKMKKRKRANRKKKK) are disordered. Composition is skewed to basic residues over residues 354–365 (KKGKKTKKQKKK) and 373–388 (KEKM…KKKK).

Belongs to the calreticulin family.

It localises to the endoplasmic reticulum lumen. Functionally, molecular calcium-binding chaperone promoting folding, oligomeric assembly and quality control in the ER via the calreticulin/calnexin cycle. This lectin may interact transiently with almost all of the monoglucosylated glycoproteins that are synthesized in the ER. The chain is Calreticulin (crt-1) from Onchocerca volvulus.